A 211-amino-acid polypeptide reads, in one-letter code: Large ribosomal subunit protein uL3 (211 aa).

Q150 bears the N5-methylglutamine mark.

This sequence belongs to the universal ribosomal protein uL3 family. Part of the 50S ribosomal subunit. Forms a cluster with proteins L14 and L19. In terms of processing, methylated by PrmB.

Functionally, one of the primary rRNA binding proteins, it binds directly near the 3'-end of the 23S rRNA, where it nucleates assembly of the 50S subunit. The chain is Large ribosomal subunit protein uL3 from Stutzerimonas stutzeri (strain A1501) (Pseudomonas stutzeri).